Consider the following 514-residue polypeptide: FAD-dependent monooxygenase AacuC (514 aa).

Residues 1–29 are disordered; sequence MVSNEYLTHGDKDEFDPAKWSSTPGELPP. The span at 8-17 shows a compositional bias: basic and acidic residues; sequence THGDKDEFDP. FAD contacts are provided by Val79 and Arg146. Arg227 is a catalytic residue. Residues Asp358 and Gly371 each coordinate FAD.

Belongs to the paxM FAD-dependent monooxygenase family. FAD is required as a cofactor.

It functions in the pathway secondary metabolite biosynthesis. Functionally, FAD-dependent monooxygenase; part of the gene cluster that mediates the biosynthesis of the tetrahydroxanthone dimer secalonic acid D. The pathway begins with the synthesis of atrochrysone thioester by the polyketide synthase AacuL. The atrochrysone carboxyl ACP thioesterase AacuM then breaks the thioester bond and releases the atrochrysone carboxylic acid from AacuL. Atrochrysone carboxylic acid is decarboxylated by the decarboxylase AacuI, and oxidized by the anthrone oxygenase AacuG to yield emodin. Emodin is then reduced to emodin hydroquinone by a yet unidentified oxidoreductase. A-ring reduction by the short chain dehydrogenase AacuN, dehydration by the scytalone dehydratase-like protein AacuK and probable spontaneous re-oxidation, results in overall deoxygenation to chrysophanol. Baeyer-Villiger oxidation by the Baeyer-Villiger monooxygenase (BVMO) AacuH then yields monodictyphenone. Monodictyphenone is transformed into compounds with the tetrahydroxanthone skeleton via methylesterification by the methyltransferase AacuQ, followed by the action of the flavin-dependent monooxygenase AacuC, the isomerase AacuP, and the short chain dehydrogenase/reductase AacuF or AacuD. AacuF and AacuD should accept the same compound as a substrate but perform the ketoreduction with a different stereoselectivity, thus yielding blennolides B and A, respectively. In the final step of the biosynthesis, the cytochrome P450 monooxygenase AacuE accepts blennolide B and/or blennolide A to conduct the dimerization reaction to furnish the tetrahydroxanthone dimers, secalonic acids D, B, and F. The protein is FAD-dependent monooxygenase AacuC of Aspergillus aculeatus (strain ATCC 16872 / CBS 172.66 / WB 5094).